The sequence spans 535 residues: uncharacterized protein (535 aa).

The next 6 helical transmembrane spans lie at Leu-55–Ile-75, Phe-82–Val-102, Ile-115–His-135, Ala-143–Phe-163, Ser-201–Met-221, and Val-346–Ala-366.

The protein localises to the membrane. This is an uncharacterized protein from Schizosaccharomyces pombe (strain 972 / ATCC 24843) (Fission yeast).